A 473-amino-acid chain; its full sequence is Probable serine/threonine-protein kinase glkA (473 aa).

The tract at residues 1–84 (MTIPTDNNSS…QSSSTATVNS (84 aa)) is disordered. Positions 7 to 84 (NNSSNNKGYN…QSSSTATVNS (78 aa)) are enriched in low complexity. In terms of domain architecture, Protein kinase spans 91-366 (YEIIKQVGQG…IDEIIAHPFL (276 aa)). ATP contacts are provided by residues 97 to 105 (VGQGTFGKV) and lysine 119. The active-site Proton acceptor is aspartate 208. Disordered stretches follow at residues 389–418 (GKSS…SNNK) and 437–473 (SSNL…TNTI). A compositionally biased stretch (low complexity) spans 442–466 (SIDNSNNGKSSSSSNNIPSLNNSNN).

The protein belongs to the protein kinase superfamily. CMGC Ser/Thr protein kinase family. GSK-3 subfamily.

The enzyme catalyses L-seryl-[tau protein] + ATP = O-phospho-L-seryl-[tau protein] + ADP + H(+). The catalysed reaction is L-threonyl-[tau protein] + ATP = O-phospho-L-threonyl-[tau protein] + ADP + H(+). The polypeptide is Probable serine/threonine-protein kinase glkA (glkA) (Dictyostelium discoideum (Social amoeba)).